We begin with the raw amino-acid sequence, 211 residues long: Uracil phosphoribosyltransferase (211 aa).

5-phospho-alpha-D-ribose 1-diphosphate-binding positions include Arg-79, Arg-104, and 131–139; that span reads DPMLATGGS. Residues Ile-196 and 201–203 contribute to the uracil site; that span reads GDA. 5-phospho-alpha-D-ribose 1-diphosphate is bound at residue Asp-202.

This sequence belongs to the UPRTase family. Requires Mg(2+) as cofactor.

It carries out the reaction UMP + diphosphate = 5-phospho-alpha-D-ribose 1-diphosphate + uracil. It participates in pyrimidine metabolism; UMP biosynthesis via salvage pathway; UMP from uracil: step 1/1. Its activity is regulated as follows. Allosterically activated by GTP. Functionally, catalyzes the conversion of uracil and 5-phospho-alpha-D-ribose 1-diphosphate (PRPP) to UMP and diphosphate. This is Uracil phosphoribosyltransferase from Lactococcus lactis subsp. cremoris (strain MG1363).